Consider the following 319-residue polypeptide: Inactive hydroxysteroid dehydrogenase-like protein 1 (319 aa).

The tract at residues 2 to 82 (AAVDSFQLLY…CGASEAIAKA (81 aa)) is required for mitochondria translocation. Residues 74-80 (GASEAIA), Lys-99, and Asp-125 contribute to the NADP(+) site.

Belongs to the short-chain dehydrogenases/reductases (SDR) family. 17-beta-HSD 3 subfamily.

It localises to the mitochondrion. The protein is Inactive hydroxysteroid dehydrogenase-like protein 1 (hsdl1) of Danio rerio (Zebrafish).